A 498-amino-acid chain; its full sequence is MTLDSYNIFNDEYLFNMPLSPLPKVLGNFETGQSVLTLTTPTLTPTTTRNIEDTLGHLLSDTQTDRVAGCAGFAVPKVLPNAMGAIDALGMGIPTCVSSLPLQQTYDASLGQGSESEDSNASYNDTQMNEEQDTTDTSSAHTDSTSYQAGHIMAGSVNGGGVNNFTNVLAAVSSSRGSASVGSSNANTSNTPARRGGGRRPNRSTNMTPEEEQKRAVRRERNKQAAARCRKRRVDQTNELTEEVEQLEKRRDSMRKEFEALTNSKKQLEYLLATHRSTCQKIRSDMLSVATCNGLIAPAGLLSAGSSGSGASSHHNHNSNDSSNGTITGMDATLNSTGRSNSPLDLKPAANIDSLLLHIKDEPLDGAIDSGSSLDRFPVTSNGSSINNINSIGNNMNSPTLNALNKVPKERPNTLAFQRPLGQMHLSMANNKAGGPTQIQGVPIQTPSTGTFNLVSLMDGGTGLTPVSGPLVPNSSSTNKHPLELPTPTAEPSKLVSL.

The segment covering 108–127 (ASLGQGSESEDSNASYNDTQ) has biased composition (polar residues). 2 disordered regions span residues 108-144 (ASLG…HTDS) and 177-234 (GSAS…KRRV). 2 stretches are compositionally biased toward low complexity: residues 135-144 (TDTSSAHTDS) and 177-191 (GSAS…TSNT). Residues 212-275 (EQKRAVRRER…KQLEYLLATH (64 aa)) enclose the bZIP domain. A basic motif region spans residues 214-233 (KRAVRRERNKQAAARCRKRR). A leucine-zipper region spans residues 240–247 (LTEEVEQL). The span at 304–325 (AGSSGSGASSHHNHNSNDSSNG) shows a compositional bias: low complexity. Disordered stretches follow at residues 304-345 (AGSS…SPLD) and 465-498 (TPVS…LVSL). Residues 333–343 (TLNSTGRSNSP) show a composition bias toward polar residues. At Ser342 the chain carries Phosphoserine.

It belongs to the bZIP family. Fos subfamily. In terms of assembly, homodimer. Heterodimer with Jra. The kay-Jra heterodimer binds more stably to the AP-1 site than either of the two proteins alone.

Its subcellular location is the nucleus. Developmentally regulated transcription factor AP-1 binds and recognizes the enhancer DNA sequence: 5'-TGA[CG]TCA-3'. May play a role in the function or determination of a particular subset of cells in the developing embryo. It is able to carry out its function either independently of or in conjunction with Jra. The sequence is that of Transcription factor kayak from Drosophila simulans (Fruit fly).